An 893-amino-acid polypeptide reads, in one-letter code: Translation initiation factor IF-2 (893 aa).

2 disordered regions span residues 135 to 169 (KAKAKADAEAKAKAKVLTEKPVQESAEDKAAKAEE) and 201 to 300 (ENEK…ESMD). Residues 201 to 224 (ENEKRWAEEEKARKEAEKTVDHHV) show a composition bias toward basic and acidic residues. Positions 251 to 265 (PSANAGNNANANAGA) are enriched in low complexity. One can recognise a tr-type G domain in the interval 393-562 (SRAPVVTIMG…LLEAEVLELK (170 aa)). The interval 402–409 (GHVDHGKT) is G1. GTP is bound at residue 402–409 (GHVDHGKT). Positions 427–431 (GITQH) are G2. The G3 stretch occupies residues 448–451 (DTPG). GTP is bound by residues 448-452 (DTPGH) and 502-505 (NKMD). A G4 region spans residues 502–505 (NKMD). The segment at 538–540 (SAK) is G5.

It belongs to the TRAFAC class translation factor GTPase superfamily. Classic translation factor GTPase family. IF-2 subfamily.

The protein localises to the cytoplasm. Its function is as follows. One of the essential components for the initiation of protein synthesis. Protects formylmethionyl-tRNA from spontaneous hydrolysis and promotes its binding to the 30S ribosomal subunits. Also involved in the hydrolysis of GTP during the formation of the 70S ribosomal complex. This is Translation initiation factor IF-2 from Shewanella halifaxensis (strain HAW-EB4).